We begin with the raw amino-acid sequence, 185 residues long: Intraflagellar transport protein 22 homolog (185 aa).

GTP is bound by residues 10 to 17 (GPCESGKT), 63 to 67 (DCGGD), and 123 to 126 (HKPG). Residue S137 is modified to Phosphoserine.

This sequence belongs to the small GTPase superfamily. Rab family. As to quaternary structure, component of the IFT complex B, at least composed of IFT20, IFT22, IFT25, IFT27, IFT46, IFT52, TRAF3IP1/IFT54, IFT57, IFT74, IFT80, IFT81, and IFT88. Interacts with IFT88. Interacts with CFAP61.

It is found in the cell projection. Its subcellular location is the cilium. Its function is as follows. Small GTPase-like component of the intraflagellar transport (IFT) complex B. The polypeptide is Intraflagellar transport protein 22 homolog (Ift22) (Rattus norvegicus (Rat)).